The chain runs to 296 residues: 4-hydroxy-tetrahydrodipicolinate synthase (296 aa).

Threonine 49 contributes to the pyruvate binding site. The active-site Proton donor/acceptor is tyrosine 137. The Schiff-base intermediate with substrate role is filled by lysine 165. Isoleucine 207 is a pyruvate binding site.

The protein belongs to the DapA family. As to quaternary structure, homotetramer; dimer of dimers.

The protein localises to the cytoplasm. It catalyses the reaction L-aspartate 4-semialdehyde + pyruvate = (2S,4S)-4-hydroxy-2,3,4,5-tetrahydrodipicolinate + H2O + H(+). The protein operates within amino-acid biosynthesis; L-lysine biosynthesis via DAP pathway; (S)-tetrahydrodipicolinate from L-aspartate: step 3/4. In terms of biological role, catalyzes the condensation of (S)-aspartate-beta-semialdehyde [(S)-ASA] and pyruvate to 4-hydroxy-tetrahydrodipicolinate (HTPA). This chain is 4-hydroxy-tetrahydrodipicolinate synthase, found in Afipia carboxidovorans (strain ATCC 49405 / DSM 1227 / KCTC 32145 / OM5) (Oligotropha carboxidovorans).